The sequence spans 64 residues: MAIKPKYIKQLGNVLLERYPDSFNTDFETNKDSVTTLTTVESKGVRNRIAGYVTQKKAQAAQKA.

Belongs to the eukaryotic ribosomal protein eS17 family.

This Halorubrum lacusprofundi (strain ATCC 49239 / DSM 5036 / JCM 8891 / ACAM 34) protein is Small ribosomal subunit protein eS17.